The primary structure comprises 396 residues: DNA polymerase IV (396 aa).

The UmuC domain maps to 6–186 (IIHVDMDAFY…LPISRLWGVG (181 aa)). Residues aspartate 10 and aspartate 104 each contribute to the Mg(2+) site. The active site involves glutamate 105.

The protein belongs to the DNA polymerase type-Y family. In terms of assembly, monomer. Mg(2+) is required as a cofactor.

It localises to the cytoplasm. It carries out the reaction DNA(n) + a 2'-deoxyribonucleoside 5'-triphosphate = DNA(n+1) + diphosphate. In terms of biological role, poorly processive, error-prone DNA polymerase involved in untargeted mutagenesis. Copies undamaged DNA at stalled replication forks, which arise in vivo from mismatched or misaligned primer ends. These misaligned primers can be extended by PolIV. Exhibits no 3'-5' exonuclease (proofreading) activity. May be involved in translesional synthesis, in conjunction with the beta clamp from PolIII. The polypeptide is DNA polymerase IV (Desulfatibacillum aliphaticivorans).